Consider the following 362-residue polypeptide: Phospho-N-acetylmuramoyl-pentapeptide-transferase (362 aa).

A run of 10 helical transmembrane segments spans residues 28–48 (GATVTALLISFLFGPRIIALL), 73–93 (TPTMGGFLILVGLVPSVLLWA), 100–120 (VWIVLFVTLGFGAVGFADDYL), 134–154 (VKLFFEFVIALIAMWALVLVS), 169–189 (TLLIELGGFFFLFGALVIVGS), 201–221 (GLAIVPVMIAAASLGLIVYLV), 241–261 (LAVFCGALIGAGLGFLWYNAP), 264–284 (MVFMGDTGSLALGGALGAIAV), 290–310 (LVLAIIGGLFVLEAVSVIVQV), and 339–359 (TVVVRFWIISVVLAMAGLATL).

Belongs to the glycosyltransferase 4 family. MraY subfamily. Requires Mg(2+) as cofactor.

It localises to the cell inner membrane. It catalyses the reaction UDP-N-acetyl-alpha-D-muramoyl-L-alanyl-gamma-D-glutamyl-meso-2,6-diaminopimeloyl-D-alanyl-D-alanine + di-trans,octa-cis-undecaprenyl phosphate = di-trans,octa-cis-undecaprenyl diphospho-N-acetyl-alpha-D-muramoyl-L-alanyl-D-glutamyl-meso-2,6-diaminopimeloyl-D-alanyl-D-alanine + UMP. Its pathway is cell wall biogenesis; peptidoglycan biosynthesis. Catalyzes the initial step of the lipid cycle reactions in the biosynthesis of the cell wall peptidoglycan: transfers peptidoglycan precursor phospho-MurNAc-pentapeptide from UDP-MurNAc-pentapeptide onto the lipid carrier undecaprenyl phosphate, yielding undecaprenyl-pyrophosphoryl-MurNAc-pentapeptide, known as lipid I. The polypeptide is Phospho-N-acetylmuramoyl-pentapeptide-transferase (Parvibaculum lavamentivorans (strain DS-1 / DSM 13023 / NCIMB 13966)).